Here is a 380-residue protein sequence, read N- to C-terminus: 3-dehydroquinate synthase (380 aa).

NAD(+) is bound by residues 100–104 (GAASD), 124–125 (TT), lysine 137, and lysine 146. Zn(2+)-binding residues include glutamate 179, histidine 251, and histidine 267.

It belongs to the sugar phosphate cyclases superfamily. Dehydroquinate synthase family. Requires NAD(+) as cofactor. Co(2+) serves as cofactor. Zn(2+) is required as a cofactor.

It is found in the cytoplasm. It catalyses the reaction 7-phospho-2-dehydro-3-deoxy-D-arabino-heptonate = 3-dehydroquinate + phosphate. The protein operates within metabolic intermediate biosynthesis; chorismate biosynthesis; chorismate from D-erythrose 4-phosphate and phosphoenolpyruvate: step 2/7. In terms of biological role, catalyzes the conversion of 3-deoxy-D-arabino-heptulosonate 7-phosphate (DAHP) to dehydroquinate (DHQ). The chain is 3-dehydroquinate synthase from Tropheryma whipplei (strain TW08/27) (Whipple's bacillus).